Consider the following 255-residue polypeptide: Fumarate reductase cytochrome b subunit (255 aa).

The next 5 membrane-spanning stretches (helical) occupy residues 33 to 53, 78 to 98, 126 to 146, 168 to 188, and 208 to 228; these read TGLI…SILI, IVSV…FLAL, WFIQ…HLFV, FWLL…IGLY, and IKWA…GAYI. Heme b-binding residues include His44, His93, His143, and His182.

This sequence belongs to the diheme cytochrome b FrdC family. As to quaternary structure, part of an enzyme complex containing three subunits: a flavoprotein (frdA), an iron-sulfur protein (frdB), and diheme cytochrome b (frdC). The cofactor is heme b.

It is found in the cell inner membrane. The fumarate reductase enzyme complex is required for fumarate respiration. This subunit anchors the complex in the membrane and binds a diheme cytochrome b. This is Fumarate reductase cytochrome b subunit (frdC) from Helicobacter pylori (strain J99 / ATCC 700824) (Campylobacter pylori J99).